Consider the following 417-residue polypeptide: Serine hydroxymethyltransferase (417 aa).

Residues leucine 121 and 125 to 127 each bind (6S)-5,6,7,8-tetrahydrofolate; that span reads GHL. Lysine 229 bears the N6-(pyridoxal phosphate)lysine mark. Residue 355–357 coordinates (6S)-5,6,7,8-tetrahydrofolate; that stretch reads SPF.

Belongs to the SHMT family. As to quaternary structure, homodimer. Pyridoxal 5'-phosphate is required as a cofactor.

The protein resides in the cytoplasm. It catalyses the reaction (6R)-5,10-methylene-5,6,7,8-tetrahydrofolate + glycine + H2O = (6S)-5,6,7,8-tetrahydrofolate + L-serine. Its pathway is one-carbon metabolism; tetrahydrofolate interconversion. It functions in the pathway amino-acid biosynthesis; glycine biosynthesis; glycine from L-serine: step 1/1. In terms of biological role, catalyzes the reversible interconversion of serine and glycine with tetrahydrofolate (THF) serving as the one-carbon carrier. This reaction serves as the major source of one-carbon groups required for the biosynthesis of purines, thymidylate, methionine, and other important biomolecules. Also exhibits THF-independent aldolase activity toward beta-hydroxyamino acids, producing glycine and aldehydes, via a retro-aldol mechanism. This is Serine hydroxymethyltransferase from Salmonella paratyphi C (strain RKS4594).